Consider the following 504-residue polypeptide: Anaerobic nitric oxide reductase transcription regulator NorR (504 aa).

Aspartate 57 is modified (4-aspartylphosphate). One can recognise a Sigma-54 factor interaction domain in the interval 187 to 416; that stretch reads MIGLSPGMTQ…LEHAIHRAVV (230 aa). Residues 215–222 and 278–287 each bind ATP; these read GETGTGKE and ADNGTLFLDE. The H-T-H motif DNA-binding region spans 479 to 498; sequence WAACARMLETDVANLHRLAK.

The protein operates within nitrogen metabolism; nitric oxide reduction. Its function is as follows. Required for the expression of anaerobic nitric oxide (NO) reductase, acts as a transcriptional activator for at least the norVW operon. Activation also requires sigma-54. This chain is Anaerobic nitric oxide reductase transcription regulator NorR, found in Shigella dysenteriae serotype 1 (strain Sd197).